The primary structure comprises 67 residues: MEWIKCSERMPESGITVLGYCVCNSNFSGIYTMRKPVIEAKNSKQDTRLIKHERVTHWMPLPEPPSE.

This is an uncharacterized protein from Salmonella typhimurium (Bacteriophage P22).